A 136-amino-acid polypeptide reads, in one-letter code: Large ribosomal subunit protein uL16c (136 aa).

Residues 1–20 (MLSPKRTKFRKQHRGRMKGK) form a disordered region.

This sequence belongs to the universal ribosomal protein uL16 family. In terms of assembly, part of the 50S ribosomal subunit.

It localises to the plastid. The protein localises to the chloroplast. This chain is Large ribosomal subunit protein uL16c, found in Brachypodium distachyon (Purple false brome).